The following is a 252-amino-acid chain: MGQKTNPNGLRLGIIRTWESQWYVNDKEIPNLIKEDFLIRKLINNFAKKSAISQIDIERLKEKNKNRITIFVHTAKPGVIIGKDGDTRNKLVVKLKELTQKEVNLNVLEVKNSDKIALLIAQNMAEQLENRMFFRRVQKMAIQKALKAGAKGVKTLISGRLGGAEIARSEGHAEGRVPLHTLRADIDYAAVEAHTTYGVLGIKVWIFHGEVLPGQTILDTRKPFASQSSNTPNRRPRNFKGGNNNHVNAKKN.

The KH type-2 domain occupies 39 to 111; that stretch reads IRKLINNFAK…EVNLNVLEVK (73 aa). The disordered stretch occupies residues 222 to 252; the sequence is KPFASQSSNTPNRRPRNFKGGNNNHVNAKKN. Residues 241–252 are compositionally biased toward polar residues; that stretch reads GGNNNHVNAKKN.

This sequence belongs to the universal ribosomal protein uS3 family. In terms of assembly, part of the 30S ribosomal subunit. Forms a tight complex with proteins S10 and S14.

Functionally, binds the lower part of the 30S subunit head. Binds mRNA in the 70S ribosome, positioning it for translation. This Phytoplasma sp. (strain STRAWB2) protein is Small ribosomal subunit protein uS3.